We begin with the raw amino-acid sequence, 660 residues long: Zeaxanthin epoxidase, chloroplastic (660 aa).

The transit peptide at 1-49 directs the protein to the chloroplast; it reads MYASSARDGIPGKWCNARRKQLPLLISKDFPAELYHSLPCKSLENGHIK. Residues 79–107 and 357–370 contribute to the FAD site; these read KVLV…LVFE and TFSW…LLGD. One can recognise an FHA domain in the interval 545 to 609; sequence LVLSRDENMP…HGTWFIDNEG (65 aa).

FAD serves as cofactor.

The protein resides in the plastid. The protein localises to the chloroplast membrane. It is found in the chloroplast thylakoid membrane. It carries out the reaction all-trans-zeaxanthin + 4 reduced [2Fe-2S]-[ferredoxin] + 2 O2 + 4 H(+) = all-trans-violaxanthin + 4 oxidized [2Fe-2S]-[ferredoxin] + 2 H2O. The catalysed reaction is all-trans-zeaxanthin + 2 reduced [2Fe-2S]-[ferredoxin] + O2 + 2 H(+) = all-trans-antheraxanthin + 2 oxidized [2Fe-2S]-[ferredoxin] + H2O. The enzyme catalyses all-trans-antheraxanthin + 2 reduced [2Fe-2S]-[ferredoxin] + O2 + 2 H(+) = all-trans-violaxanthin + 2 oxidized [2Fe-2S]-[ferredoxin] + H2O. It catalyses the reaction beta-cryptoxanthin + 2 reduced [2Fe-2S]-[ferredoxin] + O2 + 2 H(+) = (5R,6S)-5,6-epoxi-beta-cryptoxanthin + 2 oxidized [2Fe-2S]-[ferredoxin] + H2O. It participates in plant hormone biosynthesis; abscisate biosynthesis. Converts zeaxanthin into antheraxanthin and subsequently violaxanthin. Also acts on beta-cryptoxanthin. Involved in the epoxidation of zeaxanthin. This Capsicum annuum (Capsicum pepper) protein is Zeaxanthin epoxidase, chloroplastic.